The following is a 165-amino-acid chain: 2S seed storage protein 5 (165 aa).

The signal sequence occupies residues 1–20; it reads MAKLILVFATLALFILLANA. Propeptides lie at residues 21 to 37 and 71 to 89; these read SIYRTVVEFEEDDDVSN and YEADDFELTLDVDLEDDEN.

This sequence belongs to the 2S seed storage albumins family. In terms of assembly, the mature protein consists of a small and a large chain linked by disulfide bonds.

This is a 2S seed storage protein. The sequence is that of 2S seed storage protein 5 (SESA5) from Arabidopsis thaliana (Mouse-ear cress).